An 856-amino-acid polypeptide reads, in one-letter code: MSLSEEQVQHFLDQNPDFTDQYFGKTLSPEHVAGACGDGQPTDCASFRELCQVEESAALFELVQDMQESVNMERVVFKILRRLCTILRADRCSLFMYRQRNGVAELATRLFSVQPGSALEDCLVPPDSEIVFPLDIGVVGHVAQTKKMVNVQDVTECPHFSPFADELTGYETRNILATPIMNGKDVVAVIMALNKLDGPCFTSEDEDVFLKYLNFGTLNLKIYHLSYLHNCETRRGQVLLWSANKVFEELTDIERQFHKAFYTVRAYLNCDRYSVGLLDMTKEKEFFDVWPVLMGEAQPYSGPRTPDGREIVFYKVIDYILHGKEDIKVIPSPPADHWALASGLPTYVAESGFICNIMNTAADEMFTFQEGPLDDSGWVIKNVLSMPIVNKKEEIVGVATFYNRKDGKPFDEQDEVLMESLTQFLGWSVLNTDTYDKMNKLENRKDIAQDMVLYHVRCDKDEIQLILPTRERLGKEPADCEEDELGILLKEVLPGPSKFDIYEFHFSDLECTELELVKCGIQMYYELGVVRKFQIPQEVLVRFLFSVSKGYRRITYHNWRHGFNVAQTMFTLLTTGKLKSYYTDLEAFAMVTAGLCHDIDHRGTNNLYQMKSQNPLAKLHGSSILERHHLEFGKFLLSEETLNIYQNLNRRQHEHVIHLMDIAIIATDLALYFKKRTMFQKIVDESKNYEDRKSWVEYLSLETTRKEIVMAMMMTACDLSAITKPWEVQSKVALLVAAEFWEQGDLERTVLDQQPIPMMDRNKAAELPKLQVGFIDFVCTFVYKEFSRFHEEILPMFDRLQNNRKEWKALADEYEAKLKALEEEKQQQEDRTTAKKAGTEICNGGPAPKSSTCCIL.

Residue serine 2 is modified to N-acetylserine. 2 GAF domains span residues 71 to 220 and 252 to 429; these read NMER…TLNL and DIER…GWSV. The PDEase domain maps to 481–814; sequence EEDELGILLK…KEWKALADEY (334 aa). Catalysis depends on histidine 557, which acts as the Proton donor. A divalent metal cation-binding residues include histidine 561, histidine 597, aspartate 598, and aspartate 718. Residues 823 to 833 show a composition bias toward basic and acidic residues; sequence EEKQQQEDRTT. A disordered region spans residues 823–842; the sequence is EEKQQQEDRTTAKKAGTEIC. The S-geranylgeranyl cysteine moiety is linked to residue cysteine 853. A propeptide spans 854-856 (removed in mature form); the sequence is CIL.

Belongs to the cyclic nucleotide phosphodiesterase family. In terms of assembly, oligomer composed of two catalytic chains (alpha and beta), an inhibitory chain (gamma) and the delta chain. A divalent metal cation is required as a cofactor.

It localises to the membrane. The protein resides in the cell projection. The protein localises to the cilium. Its subcellular location is the photoreceptor outer segment. The enzyme catalyses 3',5'-cyclic GMP + H2O = GMP + H(+). Its function is as follows. Rod-specific cGMP phosphodiesterase that catalyzes the hydrolysis of 3',5'-cyclic GMP. Necessary for the formation of a functional phosphodiesterase holoenzyme. Involved in retinal circadian rhythm photoentrainment via modulation of UVA and orange light-induced phase-shift of the retina clock. May participate in processes of transmission and amplification of the visual signal. The protein is Rod cGMP-specific 3',5'-cyclic phosphodiesterase subunit beta of Canis lupus familiaris (Dog).